The primary structure comprises 328 residues: MAKPAKRVAVTGAAGQIAYSLLFRIANGDLLGKDQPVILQLLDLPQAQAAVKGVVMELDDCAFPLLAGVVITDDPKVAFKDADVALLVGARPRSKGMERKDLLSANAEIFTVQGAALNEVASRDVKVLVVGNPANTNAYIAMKSAPDLPKKNFTAMLRLDHNRALSQLAAKSGKPVASIEKLAVWGNHSPTMYPDFRFATAEGESLLKLINDDVWNRDTFIPTVGKRGAAIIEARGLSSAASAANAAIDHVRDWVLGTNGKWVTMGIPSDGSYGIPEDIIYGVPVVCENGEYKRVEGLEIDAFSREKMDGTLAELLEERDGVAHLLKN.

Residue 12-18 (GAAGQIA) participates in NAD(+) binding. Residues R93 and R99 each coordinate substrate. NAD(+)-binding positions include N106, Q113, and 130–132 (VGN). Residues N132 and R163 each coordinate substrate. Residue H188 is the Proton acceptor of the active site.

Belongs to the LDH/MDH superfamily. MDH type 2 family.

It catalyses the reaction (S)-malate + NAD(+) = oxaloacetate + NADH + H(+). In terms of biological role, catalyzes the reversible oxidation of malate to oxaloacetate. The polypeptide is Malate dehydrogenase (Burkholderia ambifaria (strain ATCC BAA-244 / DSM 16087 / CCUG 44356 / LMG 19182 / AMMD) (Burkholderia cepacia (strain AMMD))).